The sequence spans 252 residues: 2-succinyl-6-hydroxy-2,4-cyclohexadiene-1-carboxylate synthase (252 aa).

This sequence belongs to the AB hydrolase superfamily. MenH family. As to quaternary structure, monomer.

It catalyses the reaction 5-enolpyruvoyl-6-hydroxy-2-succinyl-cyclohex-3-ene-1-carboxylate = (1R,6R)-6-hydroxy-2-succinyl-cyclohexa-2,4-diene-1-carboxylate + pyruvate. It functions in the pathway quinol/quinone metabolism; 1,4-dihydroxy-2-naphthoate biosynthesis; 1,4-dihydroxy-2-naphthoate from chorismate: step 3/7. The protein operates within quinol/quinone metabolism; menaquinone biosynthesis. Catalyzes a proton abstraction reaction that results in 2,5-elimination of pyruvate from 2-succinyl-5-enolpyruvyl-6-hydroxy-3-cyclohexene-1-carboxylate (SEPHCHC) and the formation of 2-succinyl-6-hydroxy-2,4-cyclohexadiene-1-carboxylate (SHCHC). The protein is 2-succinyl-6-hydroxy-2,4-cyclohexadiene-1-carboxylate synthase of Shigella dysenteriae serotype 1 (strain Sd197).